A 186-amino-acid polypeptide reads, in one-letter code: Elongation factor P (186 aa).

It belongs to the elongation factor P family.

Its subcellular location is the cytoplasm. It functions in the pathway protein biosynthesis; polypeptide chain elongation. Its function is as follows. Involved in peptide bond synthesis. Stimulates efficient translation and peptide-bond synthesis on native or reconstituted 70S ribosomes in vitro. Probably functions indirectly by altering the affinity of the ribosome for aminoacyl-tRNA, thus increasing their reactivity as acceptors for peptidyl transferase. The polypeptide is Elongation factor P (Brucella abortus (strain S19)).